The sequence spans 253 residues: Imidazole glycerol phosphate synthase subunit HisF (253 aa).

Catalysis depends on residues aspartate 12 and aspartate 131.

It belongs to the HisA/HisF family. In terms of assembly, heterodimer of HisH and HisF.

The protein localises to the cytoplasm. The catalysed reaction is 5-[(5-phospho-1-deoxy-D-ribulos-1-ylimino)methylamino]-1-(5-phospho-beta-D-ribosyl)imidazole-4-carboxamide + L-glutamine = D-erythro-1-(imidazol-4-yl)glycerol 3-phosphate + 5-amino-1-(5-phospho-beta-D-ribosyl)imidazole-4-carboxamide + L-glutamate + H(+). It participates in amino-acid biosynthesis; L-histidine biosynthesis; L-histidine from 5-phospho-alpha-D-ribose 1-diphosphate: step 5/9. In terms of biological role, IGPS catalyzes the conversion of PRFAR and glutamine to IGP, AICAR and glutamate. The HisF subunit catalyzes the cyclization activity that produces IGP and AICAR from PRFAR using the ammonia provided by the HisH subunit. The chain is Imidazole glycerol phosphate synthase subunit HisF from Corynebacterium urealyticum (strain ATCC 43042 / DSM 7109).